Consider the following 219-residue polypeptide: Imidazole glycerol phosphate synthase subunit HisH (219 aa).

The Glutamine amidotransferase type-1 domain maps to 2–218 (KVVVIDSGTG…MVWTPEGTSG (217 aa)). The active-site Nucleophile is C87. Active-site residues include H193 and E195.

In terms of assembly, heterodimer of HisH and HisF.

The protein resides in the cytoplasm. The enzyme catalyses 5-[(5-phospho-1-deoxy-D-ribulos-1-ylimino)methylamino]-1-(5-phospho-beta-D-ribosyl)imidazole-4-carboxamide + L-glutamine = D-erythro-1-(imidazol-4-yl)glycerol 3-phosphate + 5-amino-1-(5-phospho-beta-D-ribosyl)imidazole-4-carboxamide + L-glutamate + H(+). It carries out the reaction L-glutamine + H2O = L-glutamate + NH4(+). The protein operates within amino-acid biosynthesis; L-histidine biosynthesis; L-histidine from 5-phospho-alpha-D-ribose 1-diphosphate: step 5/9. Functionally, IGPS catalyzes the conversion of PRFAR and glutamine to IGP, AICAR and glutamate. The HisH subunit catalyzes the hydrolysis of glutamine to glutamate and ammonia as part of the synthesis of IGP and AICAR. The resulting ammonia molecule is channeled to the active site of HisF. The chain is Imidazole glycerol phosphate synthase subunit HisH from Granulibacter bethesdensis (strain ATCC BAA-1260 / CGDNIH1).